The following is a 241-amino-acid chain: 2-heptyl-1-hydroxyquinolin-4(1H)-one methyltransferase (241 aa).

It belongs to the methyltransferase superfamily. As to quaternary structure, monomer.

The protein localises to the cytoplasm. It carries out the reaction 2-heptyl-1-hydroxy-4(1H)-quinolinone + S-adenosyl-L-methionine = 2-heptyl-1-methoxy-4(1H)-quinolinone + S-adenosyl-L-homocysteine + H(+). Its function is as follows. Involved in cellular response to chemical stress and may contribute to resistance toward antimicrobial natural compounds as well as drugs. Catalyzes the methylation and detoxification of the P.aeruginosa toxin 2-heptyl-1-hydroxy-4(1H)-quinolinone (HQNO) to 2-heptyl-1-methoxy-4(1H)-quinolinone (HMOQ). The protein is 2-heptyl-1-hydroxyquinolin-4(1H)-one methyltransferase of Mycobacterium bovis (strain BCG / Pasteur 1173P2).